The sequence spans 260 residues: Triosephosphate isomerase (260 aa).

11–13 is a binding site for substrate; sequence NWK. The active-site Electrophile is His103. Glu175 functions as the Proton acceptor in the catalytic mechanism. Residues Gly181, Ser220, and 241 to 242 contribute to the substrate site; that span reads GG.

Belongs to the triosephosphate isomerase family. Homodimer.

The protein localises to the cytoplasm. The enzyme catalyses D-glyceraldehyde 3-phosphate = dihydroxyacetone phosphate. The protein operates within carbohydrate biosynthesis; gluconeogenesis. It functions in the pathway carbohydrate degradation; glycolysis; D-glyceraldehyde 3-phosphate from glycerone phosphate: step 1/1. Its function is as follows. Involved in the gluconeogenesis. Catalyzes stereospecifically the conversion of dihydroxyacetone phosphate (DHAP) to D-glyceraldehyde-3-phosphate (G3P). This chain is Triosephosphate isomerase, found in Shewanella amazonensis (strain ATCC BAA-1098 / SB2B).